A 339-amino-acid chain; its full sequence is Phosphate acyltransferase (339 aa).

The protein belongs to the PlsX family. As to quaternary structure, homodimer. Probably interacts with PlsY.

The protein resides in the cytoplasm. The catalysed reaction is a fatty acyl-[ACP] + phosphate = an acyl phosphate + holo-[ACP]. It participates in lipid metabolism; phospholipid metabolism. Its function is as follows. Catalyzes the reversible formation of acyl-phosphate (acyl-PO(4)) from acyl-[acyl-carrier-protein] (acyl-ACP). This enzyme utilizes acyl-ACP as fatty acyl donor, but not acyl-CoA. In Dechloromonas aromatica (strain RCB), this protein is Phosphate acyltransferase.